The following is a 63-amino-acid chain: DNA-directed RNA polymerase 7 kDa subunit (63 aa).

The protein belongs to the poxviridae DNA-directed RNA polymerase 7 kDa subunit family. As to quaternary structure, the DNA-dependent RNA polymerase (vRNAP) consists of eight subunits encoded by early viral genes and termed according to their apparent molecular masses Rpo147, Rpo132, Rpo35, Rpo30, Rpo22, Rpo19, Rpo18, and Rpo7. The same holoenzyme, with the addition of the transcription-specificity factor RAP94, is used for early gene expression.

The protein localises to the virion. The enzyme catalyses RNA(n) + a ribonucleoside 5'-triphosphate = RNA(n+1) + diphosphate. Part of the DNA-dependent RNA polymerase which catalyzes the transcription of viral DNA into RNA using the four ribonucleoside triphosphates as substrates. Responsible for the transcription of early, intermediate and late genes. DNA-dependent RNA polymerase associates with the early transcription factor (ETF), itself composed of OPG118 and OPG134, thereby allowing the early genes transcription. Late transcription, and probably also intermediate transcription, require newly synthesized RNA polymerase. The polypeptide is DNA-directed RNA polymerase 7 kDa subunit (OPG090) (Monkeypox virus).